A 669-amino-acid chain; its full sequence is Acyl-coenzyme A oxidase 1 (669 aa).

FAD is bound by residues Thr-152 and Gly-191. Catalysis depends on Glu-434, which acts as the Proton acceptor. Tyr-544 is modified (phosphotyrosine). The residue at position 551 (Ser-551) is a Phosphoserine. The short motif at 667–669 is the Microbody targeting signal element; that stretch reads AHL.

This sequence belongs to the acyl-CoA oxidase family. In terms of assembly, homodimer. Requires FAD as cofactor. As to expression, expressed in glia.

Its subcellular location is the peroxisome. The protein resides in the nucleus. The enzyme catalyses a 2,3-saturated acyl-CoA + O2 = a (2E)-enoyl-CoA + H2O2. The protein operates within lipid metabolism; peroxisomal fatty acid beta-oxidation. In terms of biological role, catalyzes the desaturation of acyl-CoAs to 2-trans-enoyl-CoAs. First enzyme of the fatty acid beta-oxidation pathway. This is Acyl-coenzyme A oxidase 1 from Drosophila melanogaster (Fruit fly).